We begin with the raw amino-acid sequence, 320 residues long: Cytochrome f (320 aa).

Positions 1-35 (MQNRNTFSWVKEQMTRFISVSIMIYVITRTSISNA) are cleaved as a signal peptide. Residues Tyr-36, Cys-56, Cys-59, and His-60 each coordinate heme. A helical transmembrane segment spans residues 286-306 (VQGLLFFLASVILAQIFLVLK).

The protein belongs to the cytochrome f family. As to quaternary structure, the 4 large subunits of the cytochrome b6-f complex are cytochrome b6, subunit IV (17 kDa polypeptide, petD), cytochrome f and the Rieske protein, while the 4 small subunits are PetG, PetL, PetM and PetN. The complex functions as a dimer. The cofactor is heme.

The protein resides in the plastid. It localises to the chloroplast thylakoid membrane. Functionally, component of the cytochrome b6-f complex, which mediates electron transfer between photosystem II (PSII) and photosystem I (PSI), cyclic electron flow around PSI, and state transitions. This Drimys granadensis protein is Cytochrome f.